The chain runs to 1388 residues: ABC transporter G family member 52 (1388 aa).

Residues 1-24 (MDDAGEICSFSRSSSSAREDDEED) are disordered. Residues 135 to 406 (TNALCITKKI…FKSVGFKCPE (272 aa)) form the ABC transporter 1 domain. An ATP-binding site is contributed by 168-175 (GPPGSGKT). An ABC transmembrane type-2 1 domain is found at 484-697 (ELLKANIYRE…ALNALAVNEF (214 aa)). 7 helical membrane passes run 503 to 523 (LYIFKAIQLKLVAINAMTVFI), 541 to 561 (ALFYGMMMIVYSALAEMGPAI), 590 to 610 (IPISFLNTTVWVFLTYYVIGF), 621 to 641 (FLVLFVLCEVIYALFRFIVAL), 646 to 666 (VIASNMGPFCILIFMLSCGFI), 675 to 695 (WWIWLYWISPLMYALNALAVN), and 732 to 752 (ISIGALLGYVLLFNVLYTICL). The ABC transporter 2 domain maps to 791 to 1043 (ITFEDIRYSV…ELIKYFEAIQ (253 aa)). ATP is bound at residue 836 to 843 (GVSGAGKT). The ABC transmembrane type-2 2 domain occupies 1116–1330 (TQWLACLWKQ…TLNGLLTSQF (215 aa)). 7 helical membrane-spanning segments follow: residues 1136–1156 (IVVRYLFTIVVALLFGTMFWG), 1167–1183 (LFSIMGAMYSACMAMGV), 1223–1243 (FPYIFLQTIIYCVLVYAMVGY), 1250–1270 (FLWYLFFMFFTLSYFTFYGMM), 1280–1300 (MSAVVSTAFYNIWNLFSGFLI), 1305–1325 (IPVWWRWYYWMCPVAWTLNGL), and 1357–1377 (LLWVAAVAVVSFAILFAFLFG).

This sequence belongs to the ABC transporter superfamily. ABCG family. PDR (TC 3.A.1.205) subfamily.

The protein resides in the membrane. Functionally, may be a general defense protein. This Oryza sativa subsp. japonica (Rice) protein is ABC transporter G family member 52.